Here is an 87-residue protein sequence, read N- to C-terminus: Large ribosomal subunit protein bL27 (87 aa).

It belongs to the bacterial ribosomal protein bL27 family.

The sequence is that of Large ribosomal subunit protein bL27 from Stenotrophomonas maltophilia (strain R551-3).